Reading from the N-terminus, the 544-residue chain is CTP synthase (544 aa).

The tract at residues 1–266 (MKYIFVTGGV…GKAVEELLGL (266 aa)) is amidoligase domain. Residue Ser-12 participates in CTP binding. Ser-12 contacts UTP. Position 13-18 (13-18 (SLGKGV)) interacts with ATP. Position 53 (Tyr-53) interacts with L-glutamine. An ATP-binding site is contributed by Asp-70. Asp-70 and Glu-140 together coordinate Mg(2+). Residues 147–149 (DIE), 187–192 (KTKPTQ), and Lys-223 each bind CTP. UTP-binding positions include 187 to 192 (KTKPTQ) and Lys-223. Positions 291–544 (TIAIAGKYTA…VKAALEHQQQ (254 aa)) constitute a Glutamine amidotransferase type-1 domain. L-glutamine is bound at residue Gly-356. Catalysis depends on Cys-383, which acts as the Nucleophile; for glutamine hydrolysis. Residues 384–387 (LGMQ), Glu-407, and Arg-467 contribute to the L-glutamine site. Catalysis depends on residues His-517 and Glu-519.

This sequence belongs to the CTP synthase family. In terms of assembly, homotetramer.

The enzyme catalyses UTP + L-glutamine + ATP + H2O = CTP + L-glutamate + ADP + phosphate + 2 H(+). It carries out the reaction L-glutamine + H2O = L-glutamate + NH4(+). It catalyses the reaction UTP + NH4(+) + ATP = CTP + ADP + phosphate + 2 H(+). Its pathway is pyrimidine metabolism; CTP biosynthesis via de novo pathway; CTP from UDP: step 2/2. Allosterically activated by GTP, when glutamine is the substrate; GTP has no effect on the reaction when ammonia is the substrate. The allosteric effector GTP functions by stabilizing the protein conformation that binds the tetrahedral intermediate(s) formed during glutamine hydrolysis. Inhibited by the product CTP, via allosteric rather than competitive inhibition. Functionally, catalyzes the ATP-dependent amination of UTP to CTP with either L-glutamine or ammonia as the source of nitrogen. Regulates intracellular CTP levels through interactions with the four ribonucleotide triphosphates. The protein is CTP synthase of Deinococcus radiodurans (strain ATCC 13939 / DSM 20539 / JCM 16871 / CCUG 27074 / LMG 4051 / NBRC 15346 / NCIMB 9279 / VKM B-1422 / R1).